Reading from the N-terminus, the 354-residue chain is Guanine nucleotide-binding protein G(o) subunit alpha (354 aa).

A lipid anchor (N-myristoyl glycine) is attached at Gly2. Cys3 carries S-palmitoyl cysteine lipidation. Residues 32-354 (KDVKLLLLGA…ANNLRGCGLY (323 aa)) enclose the G-alpha domain. A G1 motif region spans residues 35-48 (KLLLLGAGESGKST). Glu43, Lys46, Ser47, Thr48, Ser152, Leu176, Arg177, Thr178, and Arg179 together coordinate GTP. Residue Ser47 participates in Mg(2+) binding. Residues 174-182 (DILRTRVKT) form a G2 motif region. Thr182 contributes to the Mg(2+) binding site. The G3 motif stretch occupies residues 197–206 (FRLFDVGGQR). Residue Gln205 is modified to 5-glutamyl histamine. The interval 266-273 (ILFLNKKD) is G4 motif. Residues Asn270, Asp273, and Cys325 each contribute to the GTP site. A G5 motif region spans residues 324 to 329 (TCATDT). Asn346 carries the deamidated asparagine; in form Alpha-3 modification. The S-palmitoyl cysteine moiety is linked to residue Cys351.

The protein belongs to the G-alpha family. G(i/o/t/z) subfamily. G proteins are composed of 3 units; alpha, beta and gamma. The alpha chain contains the guanine nucleotide binding site. Forms a complex with GNB1 and GNG3. Interacts with RGS14. Interacts with RGS16. Interacts with RGS19. Interacts (when palmitoylated) with ADGRG3. In terms of processing, deamidation of Asn-346 converts alpha-1 to alpha-3. Histaminylated at Gln-205 residues by TGM2.

The protein resides in the cell membrane. The protein localises to the membrane. The enzyme catalyses GTP + H2O = GDP + phosphate + H(+). With respect to regulation, the GTPase activity is promoted by GTPAse activators, such as RGS14, RGS16 and RGS19. In terms of biological role, guanine nucleotide-binding proteins (G proteins) function as transducers downstream of G protein-coupled receptors (GPCRs) in numerous signaling cascades. The alpha chain contains the guanine nucleotide binding site and alternates between an active, GTP-bound state and an inactive, GDP-bound state. Signaling by an activated GPCR promotes GDP release and GTP binding. The alpha subunit has a low GTPase activity that converts bound GTP to GDP, thereby terminating the signal. Both GDP release and GTP hydrolysis are modulated by numerous regulatory proteins. Signaling is mediated via effector proteins, such as adenylate cyclase. Inhibits adenylate cyclase activity, leading to decreased intracellular cAMP levels. The polypeptide is Guanine nucleotide-binding protein G(o) subunit alpha (GNAO1) (Cricetulus longicaudatus (Long-tailed dwarf hamster)).